Reading from the N-terminus, the 65-residue chain is Large ribosomal subunit protein uL30 (65 aa).

It belongs to the universal ribosomal protein uL30 family. In terms of assembly, part of the 50S ribosomal subunit.

In Brucella suis (strain ATCC 23445 / NCTC 10510), this protein is Large ribosomal subunit protein uL30.